The primary structure comprises 203 residues: FMN-dependent NADH:quinone oxidoreductase (203 aa).

FMN contacts are provided by residues serine 9, 15–17, and 138–141; these read SVS and SRGG.

The protein belongs to the azoreductase type 1 family. Homodimer. It depends on FMN as a cofactor.

The enzyme catalyses 2 a quinone + NADH + H(+) = 2 a 1,4-benzosemiquinone + NAD(+). The catalysed reaction is N,N-dimethyl-1,4-phenylenediamine + anthranilate + 2 NAD(+) = 2-(4-dimethylaminophenyl)diazenylbenzoate + 2 NADH + 2 H(+). In terms of biological role, quinone reductase that provides resistance to thiol-specific stress caused by electrophilic quinones. Its function is as follows. Also exhibits azoreductase activity. Catalyzes the reductive cleavage of the azo bond in aromatic azo compounds to the corresponding amines. In Methylorubrum extorquens (strain PA1) (Methylobacterium extorquens), this protein is FMN-dependent NADH:quinone oxidoreductase.